Reading from the N-terminus, the 541-residue chain is Glycogen synthase (541 aa).

Lys17 is a binding site for ADP-alpha-D-glucose. The segment at 497 to 541 is disordered; the sequence is LARPASPPDTAPVGKPARRRRTTALSTTARAHPVARAAGREKIRA.

This sequence belongs to the glycosyltransferase 1 family. Bacterial/plant glycogen synthase subfamily.

The catalysed reaction is [(1-&gt;4)-alpha-D-glucosyl](n) + ADP-alpha-D-glucose = [(1-&gt;4)-alpha-D-glucosyl](n+1) + ADP + H(+). Its pathway is glycan biosynthesis; glycogen biosynthesis. Functionally, synthesizes alpha-1,4-glucan chains using ADP-glucose. This is Glycogen synthase from Ralstonia nicotianae (strain ATCC BAA-1114 / GMI1000) (Ralstonia solanacearum).